Consider the following 77-residue polypeptide: MIIPWKELETETLNSLIESFVLREGTDYGEHERSLEQKVEDVRRQLKNGEVLLVWSELHETINIMPRGQFRAGQEEI.

This sequence belongs to the UPF0270 family.

This Serratia proteamaculans (strain 568) protein is UPF0270 protein Spro_4577.